Reading from the N-terminus, the 614-residue chain is Pyrophosphate--fructose 6-phosphate 1-phosphotransferase subunit alpha 1 (614 aa).

Belongs to the phosphofructokinase type A (PFKA) family. PPi-dependent PFK group II subfamily. Clade 'Long' sub-subfamily. As to quaternary structure, tetramer of two alpha (regulatory) and two beta (catalytic) chains. In terms of tissue distribution, expressed in leaves, roots, and flowers (e.g. sepals, petals, stamen and gynoecium).

The protein localises to the cytoplasm. The protein operates within carbohydrate degradation; glycolysis; D-glyceraldehyde 3-phosphate and glycerone phosphate from D-glucose: step 3/4. Allosterically activated by fructose 2,6-bisphosphate. Its function is as follows. Regulatory subunit of pyrophosphate--fructose 6-phosphate 1-phosphotransferase. The polypeptide is Pyrophosphate--fructose 6-phosphate 1-phosphotransferase subunit alpha 1 (Arabidopsis thaliana (Mouse-ear cress)).